Consider the following 120-residue polypeptide: uncharacterized protein (120 aa).

A disordered region spans residues 90–120 (SLASRGGHMTQSGQCHVSGSLLGRGHKSRGR).

This is an uncharacterized protein from Homo sapiens (Human).